The following is a 599-amino-acid chain: Elongation factor 4 (599 aa).

A tr-type G domain is found at 5–187 (SKIRNFSIVA…AIVKRLPAPT (183 aa)). GTP is bound by residues 17 to 22 (DHGKST) and 134 to 137 (NKID).

This sequence belongs to the TRAFAC class translation factor GTPase superfamily. Classic translation factor GTPase family. LepA subfamily.

It localises to the cell inner membrane. It carries out the reaction GTP + H2O = GDP + phosphate + H(+). Its function is as follows. Required for accurate and efficient protein synthesis under certain stress conditions. May act as a fidelity factor of the translation reaction, by catalyzing a one-codon backward translocation of tRNAs on improperly translocated ribosomes. Back-translocation proceeds from a post-translocation (POST) complex to a pre-translocation (PRE) complex, thus giving elongation factor G a second chance to translocate the tRNAs correctly. Binds to ribosomes in a GTP-dependent manner. This Ruegeria sp. (strain TM1040) (Silicibacter sp.) protein is Elongation factor 4.